A 349-amino-acid chain; its full sequence is CCN family member 2 (349 aa).

A signal peptide spans 1-26 (MSATGLGPVRCAFVLLLALCSRPASS). The region spanning 27 to 98 (QDCSAPCQCP…NRKIGVCTAK (72 aa)) is the IGFBP N-terminal domain. 6 disulfide bridges follow: Cys-29-Cys-54, Cys-33-Cys-56, Cys-35-Cys-57, Cys-43-Cys-60, Cys-68-Cys-82, and Cys-74-Cys-95. The VWFC domain occupies 101 to 167 (APCVFGGTVY…GKCCEEWVCD (67 aa)). In terms of domain architecture, TSP type-1 spans 198 to 243 (NCLVQTTEWSACSKTCGMGISTRVTNDNAFCRLEKQSRLCMVRPCE). The segment at 247 to 349 (EENIKKGKKC…YYRKMYGDMA (103 aa)) is heparin-binding. 5 disulfide bridges follow: Cys-256–Cys-293, Cys-273–Cys-307, Cys-284–Cys-323, Cys-287–Cys-325, and Cys-292–Cys-329. The 75-residue stretch at 256–330 (CIRTPKISKP…KTCACHYNCP (75 aa)) folds into the CTCK domain.

Belongs to the CCN family. Monomer. Interacts with TSKU.

It is found in the secreted. The protein localises to the extracellular space. Its subcellular location is the extracellular matrix. Functionally, major connective tissue mitoattractant secreted by vascular endothelial cells. Promotes proliferation and differentiation of chondrocytes. Is involved in the stimulation of osteoblast differentiation and has a critical role in osteogenesis. Mediates heparin- and divalent cation-dependent cell adhesion in many cell types including fibroblasts, myofibroblasts, endothelial and epithelial cells. Enhances fibroblast growth factor-induced DNA synthesis. The protein is CCN family member 2 (CCN2) of Bos taurus (Bovine).